Reading from the N-terminus, the 298-residue chain is Probable pyridoxal 5'-phosphate synthase subunit SNZ2 (298 aa).

A D-ribose 5-phosphate-binding site is contributed by D21. The active-site Schiff-base intermediate with D-ribose 5-phosphate is the K78. Residues G150, G213, and 234–235 (GS) each bind D-ribose 5-phosphate.

Belongs to the PdxS/SNZ family. As to quaternary structure, homohexamer. Interacts with THI11.

The enzyme catalyses aldehydo-D-ribose 5-phosphate + D-glyceraldehyde 3-phosphate + L-glutamine = pyridoxal 5'-phosphate + L-glutamate + phosphate + 3 H2O + H(+). It functions in the pathway cofactor biosynthesis; pyridoxal 5'-phosphate biosynthesis. Its function is as follows. Catalyzes the formation of pyridoxal 5'-phosphate from ribose 5-phosphate (RBP), glyceraldehyde 3-phosphate (G3P) and ammonia. The ammonia is provided by a SNO isoform. Can also use ribulose 5-phosphate and dihydroxyacetone phosphate as substrates, resulting from enzyme-catalyzed isomerization of RBP and G3P, respectively. This Saccharomyces cerevisiae (strain ATCC 204508 / S288c) (Baker's yeast) protein is Probable pyridoxal 5'-phosphate synthase subunit SNZ2 (SNZ2).